A 298-amino-acid polypeptide reads, in one-letter code: GTPase Era (298 aa).

Positions 3–170 (KSGFVAILGR…IKLLTDNLEE (168 aa)) constitute an Era-type G domain. The interval 11–18 (GRPNVGKS) is G1. GTP is bound at residue 11 to 18 (GRPNVGKS). The interval 37-41 (QTTRN) is G2. Residues 58-61 (DTPG) are G3. Residues 58-62 (DTPGI) and 120-123 (NKID) contribute to the GTP site. Positions 120–123 (NKID) are G4. Positions 149 to 151 (ISA) are G5. One can recognise a KH type-2 domain in the interval 201–279 (TQQEVPHSVA…YLETWVKVKK (79 aa)).

The protein belongs to the TRAFAC class TrmE-Era-EngA-EngB-Septin-like GTPase superfamily. Era GTPase family. Monomer.

It localises to the cytoplasm. It is found in the cell membrane. In terms of biological role, an essential GTPase that binds both GDP and GTP, with rapid nucleotide exchange. Plays a role in 16S rRNA processing and 30S ribosomal subunit biogenesis and possibly also in cell cycle regulation and energy metabolism. In Streptococcus pyogenes serotype M2 (strain MGAS10270), this protein is GTPase Era.